A 438-amino-acid chain; its full sequence is UPF0229 protein Smed_1028 (438 aa).

Residues 55–107 (PARGVNEPAFQPDSNSGERRHVLPGNREFAAGDRIPKRGGGGGAGNAGAGTGQ) are disordered. Gly residues predominate over residues 92–105 (RGGGGGAGNAGAGT).

Belongs to the UPF0229 family.

In Sinorhizobium medicae (strain WSM419) (Ensifer medicae), this protein is UPF0229 protein Smed_1028.